Reading from the N-terminus, the 574-residue chain is Septation ring formation regulator EzrA (574 aa).

Residues 1–7 (MSSGIIL) are Extracellular-facing. A helical membrane pass occupies residues 8 to 26 (LIVAIVLLVIIAYLVGVII). Residues 27–574 (RKRNDSLITS…YEKTREHIRF (548 aa)) lie on the Cytoplasmic side of the membrane. Coiled-coil stretches lie at residues 102–141 (NFIRAKHEINSVESQLNLVEEDIASIREALNILKEQEEKN), 274–350 (ELVT…ETES), and 459–520 (QLEA…SFEA).

It belongs to the EzrA family.

It is found in the cell membrane. Its function is as follows. Negative regulator of FtsZ ring formation; modulates the frequency and position of FtsZ ring formation. Inhibits FtsZ ring formation at polar sites. Interacts either with FtsZ or with one of its binding partners to promote depolymerization. The protein is Septation ring formation regulator EzrA of Streptococcus pyogenes serotype M3 (strain SSI-1).